Reading from the N-terminus, the 411-residue chain is Serine--tRNA ligase (411 aa).

L-serine is bound at residue threonine 226 to glutamate 228. Arginine 257–glutamate 259 is a binding site for ATP. Glutamate 280 is a binding site for L-serine. Residue glutamate 344–serine 347 coordinates ATP. Serine 379 contacts L-serine.

The protein belongs to the class-II aminoacyl-tRNA synthetase family. Type-1 seryl-tRNA synthetase subfamily. Homodimer. The tRNA molecule binds across the dimer.

The protein localises to the cytoplasm. It carries out the reaction tRNA(Ser) + L-serine + ATP = L-seryl-tRNA(Ser) + AMP + diphosphate + H(+). It catalyses the reaction tRNA(Sec) + L-serine + ATP = L-seryl-tRNA(Sec) + AMP + diphosphate + H(+). Its pathway is aminoacyl-tRNA biosynthesis; selenocysteinyl-tRNA(Sec) biosynthesis; L-seryl-tRNA(Sec) from L-serine and tRNA(Sec): step 1/1. Catalyzes the attachment of serine to tRNA(Ser). Is also able to aminoacylate tRNA(Sec) with serine, to form the misacylated tRNA L-seryl-tRNA(Sec), which will be further converted into selenocysteinyl-tRNA(Sec). This is Serine--tRNA ligase from Campylobacter jejuni subsp. jejuni serotype O:6 (strain 81116 / NCTC 11828).